A 1008-amino-acid chain; its full sequence is ATP-dependent DNA/RNA helicase DHX36 (1008 aa).

Residues 1–51 (MSYDYHQNWGRDGGPRSSGGGYGGGPAGGHGGNRGSGGGGGGGGGGRGGRG) are required for recruitment to cytoplasmic stress granules. Residues 1 to 58 (MSYDYHQNWGRDGGPRSSGGGYGGGPAGGHGGNRGSGGGGGGGGGGRGGRGRHPGHLK) are disordered. The required for the pre-miR-134 transport stretch occupies residues 1–104 (MSYDYHQNWG…IVQLLNSVQA (104 aa)). A necessary for nuclear and nucleolar caps localizations region spans residues 1–200 (MSYDYHQNWG…KKNDLRYIEM (200 aa)). Positions 16–48 (RSSGGGYGGGPAGGHGGNRGSGGGGGGGGGGRG) are enriched in gly residues. The tract at residues 53–75 (HPGHLKGREIGMWYAKKQGQKNK) is DSM (DHX36-specific motif). The interval 53-105 (HPGHLKGREIGMWYAKKQGQKNKEAERQERAVVHMDERREEQIVQLLNSVQAK) is required for G4-DNA- and G4-RNA-binding. Residues 72 to 157 (QKNKEAERQE…INQEKKMFRI (86 aa)) are a coiled coil. 2 recA-like domain regions span residues 106–386 (NDKE…MIHI) and 387–628 (PGFT…DYQL). The residue at position 161 (Ser161) is a Phosphoserine. A Helicase ATP-binding domain is found at 217–387 (VNLIDNHQVT…FGNCPMIHIP (171 aa)). ATP is bound at residue 233–238 (GCGKTT). Residues 265–317 (RRISAISVAERVAAERAESCGSGNSTGYQIRLQSRLPRKQGSILYCTTGIILQ) are necessary for interaction with single-stranded DNA at the 3'-end of the G4-DNA structure. The short motif at 334–337 (DEIH) is the DEAH box element. 2 residues coordinate Mg(2+): Glu335 and His337. One can recognise a Helicase C-terminal domain in the interval 477 to 647 (ALIRYIVLEE…ELCLQIKILR (171 aa)). Residues 498–557 (WDNISTLHDLLMSQVMFKSDKFLIIPLHSLMPTVNQTQVFKRTPPGVRKIVIATNIAETS) are necessary for interaction with single-stranded DNA at the 3'-end of the G4-DNA structure. Residues 517-528 (DKFLIIPLHSLM) carry the Nuclear localization signal motif. Residues Ser557 and 602-605 (RAGR) contribute to the ATP site. Positions 629–698 (PEILRTPLEE…LGVHLARLPV (70 aa)) are WH domain. Necessary for interaction with single-stranded DNA at the 3'-end of the G4-DNA structure stretches follow at residues 638-697 (ELCL…ARLP), 849-860 (NLGKKRKMVKVY), and 870-900 (HPKS…IYLY). An OB-fold-like subdomains region spans residues 841–905 (PKVAKIRLNL…SIYLYDCTEV (65 aa)). At Lys947 the chain carries N6-acetyllysine. At Ser963 the chain carries Phosphoserine.

Belongs to the DEAD box helicase family. DEAH subfamily. In terms of assembly, found in a multi-helicase-TICAM1 complex at least composed of DHX36, DDX1, DDX21 and TICAM1; this complex exists in resting cells with or without dsRNA poly(I:C) ligand stimulation. Interacts (via C-terminus) with TICAM1 (via TIR domain). Interacts (via C-terminus) with DDX21; this interaction serves as bridges to TICAM1. Interacts with TERT; this interaction is dependent on the ability of DHX36 to bind to the G-quadruplex RNA (G4-RNA) structure present in the telomerase RNA template component (TERC). Interacts with DKC1; this interaction is dependent on the ability of DHX36 to bind to the G4-RNA structure present in TERC. Interacts with PARN; this interaction stimulates PARN to enhance uPA mRNA decay. Interacts with EXOSC3; this interaction occurs in a RNase-insensitive manner. Interacts with EXOSC10; this interaction occurs in a RNase-insensitive manner. Interacts with ILF3; this interaction occurs in a RNA-dependent manner. Interacts with ELAVL1; this interaction occurs in an RNA-dependent manner. Interacts with DDX5; this interaction occurs in a RNA-dependent manner. Interacts with DDX17; this interaction occurs in a RNA-dependent manner. Interacts with HDAC1; this interaction occurs in a RNA-dependent manner. Interacts with HDAC3; this interaction occurs in a RNA-dependent manner. Interacts with HDAC4. Interacts with AGO1. Interacts with AGO2. Interacts with ERCC6. Mg(2+) is required as a cofactor. In terms of tissue distribution, highly expressed in testis.

It is found in the nucleus. Its subcellular location is the cytoplasm. The protein resides in the cytosol. The protein localises to the stress granule. It localises to the nucleus speckle. It is found in the chromosome. Its subcellular location is the telomere. The protein resides in the mitochondrion. The protein localises to the perikaryon. It localises to the cell projection. It is found in the dendrite. Its subcellular location is the axon. It carries out the reaction ATP + H2O = ADP + phosphate + H(+). ATPase activity is enhanced in the presence of homomeric poly(U) RNAs, but not by double-stranded DNA (dsDNA), double-stranded RNA (dsRNA) and tRNA. In terms of biological role, multifunctional ATP-dependent helicase that unwinds G-quadruplex (G4) structures. Plays a role in many biological processes such as genomic integrity, gene expression regulations and as a sensor to initiate antiviral responses. G4 structures correspond to helical structures containing guanine tetrads. Binds with high affinity to and unwinds G4 structures that are formed in nucleic acids (G4-DNA and G4-RNA). Plays a role in genomic integrity. Converts the G4-RNA structure present in telomerase RNA template component (TREC) into a double-stranded RNA to promote P1 helix formation that acts as a template boundary ensuring accurate reverse transcription. Plays a role in transcriptional regulation. Resolves G4-DNA structures in promoters of genes, such as YY1, KIT/c-kit and ALPL and positively regulates their expression. Plays a role in post-transcriptional regulation. Unwinds a G4-RNA structure located in the 3'-UTR polyadenylation site of the pre-mRNA TP53 and stimulates TP53 pre-mRNA 3'-end processing in response to ultraviolet (UV)-induced DNA damage. Binds to the precursor-microRNA-134 (pre-miR-134) terminal loop and regulates its transport into the synapto-dendritic compartment. Involved in the pre-miR-134-dependent inhibition of target gene expression and the control of dendritic spine size. Plays a role in the regulation of cytoplasmic mRNA translation and mRNA stability. Binds to both G4-RNA structures and alternative non-quadruplex-forming sequence within the 3'-UTR of the PITX1 mRNA regulating negatively PITX1 protein expression. Binds to both G4-RNA structure in the 5'-UTR and AU-rich elements (AREs) localized in the 3'-UTR of NKX2-5 mRNA to either stimulate protein translation or induce mRNA decay in an ELAVL1-dependent manner, respectively. Also binds to ARE sequences present in several mRNAs mediating exosome-mediated 3'-5' mRNA degradation. Involved in cytoplasmic urokinase-type plasminogen activator (uPA) mRNA decay. Component of a multi-helicase-TICAM1 complex that acts as a cytoplasmic sensor of viral double-stranded RNA (dsRNA) and plays a role in the activation of a cascade of antiviral responses including the induction of pro-inflammatory cytokines via the adapter molecule TICAM1. Required for early embryonic development and hematopoiesis. Involved in the regulation of cardioblast differentiation and proliferation during heart development. Involved in spermatogonia differentiation. May play a role in ossification. This chain is ATP-dependent DNA/RNA helicase DHX36, found in Homo sapiens (Human).